Here is an 879-residue protein sequence, read N- to C-terminus: Alanine--tRNA ligase (879 aa).

The Zn(2+) site is built by His566, His570, Cys668, and His672.

It belongs to the class-II aminoacyl-tRNA synthetase family. It depends on Zn(2+) as a cofactor.

It is found in the cytoplasm. The catalysed reaction is tRNA(Ala) + L-alanine + ATP = L-alanyl-tRNA(Ala) + AMP + diphosphate. In terms of biological role, catalyzes the attachment of alanine to tRNA(Ala) in a two-step reaction: alanine is first activated by ATP to form Ala-AMP and then transferred to the acceptor end of tRNA(Ala). Also edits incorrectly charged Ser-tRNA(Ala) and Gly-tRNA(Ala) via its editing domain. This is Alanine--tRNA ligase from Listeria monocytogenes serovar 1/2a (strain ATCC BAA-679 / EGD-e).